The chain runs to 473 residues: Cannabinoid receptor 1 (473 aa).

Over 1–118 (MKSILDGLAD…CFMILNPSQQ (118 aa)) the chain is Extracellular. The tract at residues 2–23 (KSILDGLADTTFRTITTDLLYV) is required for mitochondrial localization. 2 N-linked (GlcNAc...) asparagine glycosylation sites follow: Asn-79 and Asn-85. A helical transmembrane segment spans residues 119-144 (LAIAVLSLTLGTFTVLENLLVLCVIL). Residues 145 to 156 (HSRSLRCRPSYH) lie on the Cytoplasmic side of the membrane. Residues 157–177 (FIGSLAVADLLGSVIFVYSFV) traverse the membrane as a helical segment. Topologically, residues 178–189 (DFHVFHRKDSPN) are extracellular. A helical membrane pass occupies residues 190 to 214 (VFLFKLGGVTASFTASVGSLFLTAI). Over 215-234 (DRYISIHRPLAYKRIVTRPK) the chain is Cytoplasmic. The helical transmembrane segment at 235–257 (AVVAFCVMWTIAIVIAVLPLLGW) threads the bilayer. Residues 258–275 (NCKKLNSVCSDIFPLIDE) are Extracellular-facing. The helical transmembrane segment at 276 to 301 (TYLMFWIGVTSILLLFIVYAYMYILW) threads the bilayer. Residues 302 to 346 (KAHSHAVRMLQRGTQKSIIIQSTEDGKVQITRPDQTRMDIRLAKT) lie on the Cytoplasmic side of the membrane. Residues 347 to 367 (LVLILVVLIICWGPLLAIMVY) traverse the membrane as a helical segment. At 368–379 (DVFGKMNKLIKT) the chain is on the extracellular side. Residues 380–401 (IFAFCSMLCLLNSTVNPIIYAL) traverse the membrane as a helical segment. Residues 402–473 (RSKDLRHAFR…VSTDTTAEAL (72 aa)) lie on the Cytoplasmic side of the membrane. Cys-417 is lipidated: S-palmitoyl cysteine.

This sequence belongs to the G-protein coupled receptor 1 family. In terms of processing, palmitoylation at Cys-417 is important for recruitment at both plasma membrane and lipid rafts and association with G protein alpha subunits.

The protein resides in the cell membrane. Its subcellular location is the mitochondrion outer membrane. It localises to the cell projection. The protein localises to the axon. It is found in the presynapse. Its function is as follows. G-protein coupled receptor for cannabinoids. Mediates many cannabinoid-induced effects in the central nervous system (CNS), as well as in peripheral tissues. Regulates cellular respiration and energy production in response to cannabinoids. Signaling typically involves reduction in cyclic AMP. The chain is Cannabinoid receptor 1 (CNR1) from Taeniopygia guttata (Zebra finch).